A 388-amino-acid chain; its full sequence is Na(+)/H(+) antiporter NhaA (388 aa).

Over 1–11 the chain is Cytoplasmic; that stretch reads MKHLHRFFSSD. Residues 12-31 form a helical membrane-spanning segment; the sequence is ASGGIILIIAAILAMIMANS. Residues 32 to 58 are Periplasmic-facing; the sequence is GATSGWYHDFLETPVQLRVGSLEINKN. The chain crosses the membrane as a helical span at residues 59–80; that stretch reads MLLWINDALMAVFFLLVGLEVK. Residues 81–96 lie on the Cytoplasmic side of the membrane; it reads RELMQGSLASLLQAAF. Residues 97-116 form a helical membrane-spanning segment; it reads PVIAAIGGMIVPALLYLAFN. The Periplasmic segment spans residues 117-122; it reads YADPIT. Residues 123 to 130 traverse the membrane as a helical segment; the sequence is REGWAIPA. Residues 131 to 154 lie on the Cytoplasmic side of the membrane; that stretch reads ATDIAFALGVLALLGSRVPLVLKI. Residues 155–176 form a helical membrane-spanning segment; that stretch reads FLMALAIIDDLGAIIIIALFYT. Over 177 to 180 the chain is Periplasmic; it reads NDLS. The chain crosses the membrane as a helical span at residues 181 to 200; sequence MASLGVAAVAIAVLAVLNLC. Residues 201–204 lie on the Cytoplasmic side of the membrane; that stretch reads GVRR. Residues 205-222 traverse the membrane as a helical segment; the sequence is TGVYILVGVVLWTAVLKS. A topological domain (periplasmic) is located at residue Gly-223. The helical transmembrane segment at 224-236 threads the bilayer; the sequence is VHATLAGVIVGFF. Residues 237 to 253 lie on the Cytoplasmic side of the membrane; sequence IPLKEKHGRSPAKRLEH. The helical transmembrane segment at 254–272 threads the bilayer; the sequence is VLHPWVAYLILPLFAFANA. Topologically, residues 273-286 are periplasmic; sequence GVSLQGVTLDGLTS. A helical membrane pass occupies residues 287–310; the sequence is ILPLGIIAGLLIGKPLGISLFCWL. The Cytoplasmic segment spans residues 311–339; sequence ALRLKLAHLPEGTTYQQIMVVGILCGIGF. A helical membrane pass occupies residues 340 to 350; the sequence is TMSIFIASLAF. The Periplasmic segment spans residues 351–357; that stretch reads GSVDPEL. The chain crosses the membrane as a helical span at residues 358–380; it reads INWAKLGILVGSISSAVIGYSWL. Topologically, residues 381-388 are cytoplasmic; the sequence is RVRLRPSV.

It belongs to the NhaA Na(+)/H(+) (TC 2.A.33) antiporter family.

It localises to the cell inner membrane. It catalyses the reaction Na(+)(in) + 2 H(+)(out) = Na(+)(out) + 2 H(+)(in). Functionally, na(+)/H(+) antiporter that extrudes sodium in exchange for external protons. The polypeptide is Na(+)/H(+) antiporter NhaA (Shigella flexneri serotype 5b (strain 8401)).